The sequence spans 139 residues: MVTHAAGARTFCEEQKKGSTYSVPKSKEKLMEKHSQEARQADRESEKPVDSLHPGAGTAKHPPPAASLEEKPDVKQKSSRKKVVVPQIIITRASNETLVSCSSSGSDQQRTIREPEDWGPYRRHRNPSTADAYNSHLKE.

The segment at 1–67 is interaction with ATG16L1; it reads MVTHAAGART…TAKHPPPAAS (67 aa). The disordered stretch occupies residues 1–83; the sequence is MVTHAAGART…VKQKSSRKKV (83 aa). A compositionally biased stretch (basic and acidic residues) spans 25-50; it reads KSKEKLMEKHSQEARQADRESEKPVD. An interaction with VDAC2 region spans residues 68–139; sequence LEEKPDVKQK…ADAYNSHLKE (72 aa). Positions 86–91 match the PQIIIT motif; sequence PQIIIT. S94 bears the Phosphoserine mark. The span at 97-109 shows a compositional bias: polar residues; sequence TLVSCSSSGSDQQ. Residues 97–139 are disordered; sequence TLVSCSSSGSDQQRTIREPEDWGPYRRHRNPSTADAYNSHLKE. Basic and acidic residues predominate over residues 110–120; that stretch reads RTIREPEDWGP.

In terms of assembly, interacts (via PQIIIT motif) with PPP3R1, PPP3R2, PPP3CA, PPP3CB and PPP3CC. Interacts with VDAC2. Interacts with ATG16L1 (via WD repeats).

It is found in the cytoplasm. The protein resides in the cytosol. It localises to the nucleus. The protein localises to the mitochondrion. Functionally, plays an important role in sperm motility and male fertility. Required for sperm midpiece flexibility and for the localization of sperm calcineurin to the mitochondria. Promotes mitophagy as well as acts as an autophagy mediator in male germline cells. Links damaged mitochondria to autophagosomes via its binding to the outer mitochondrial membrane protein VDAC2, as well as to key autophagy machinery component ATG16L1. This Homo sapiens (Human) protein is Spermatogenesis-associated protein 33 (SPATA33).